A 306-amino-acid chain; its full sequence is Probable C-terminal domain small phosphatase (306 aa).

The segment covering 1–36 (MNSSPITQVSNPNDSLNHSSTNLIPSSHNSLNNYPQ) has biased composition (polar residues). Disordered regions lie at residues 1 to 45 (MNSS…NRKK) and 61 to 116 (NDQN…NKDS). The span at 61–111 (NDQNNGNNINTDNGASNNDKLQQQKQYNQQQQQQYNQHQQQQQQQQQQQQY) shows a compositional bias: low complexity. The FCP1 homology domain maps to 132-290 (RHVGLKTLVL…LDLLPLLDDL (159 aa)). Asp-142 serves as the catalytic 4-aspartylphosphate intermediate. Residues Asp-142, Asp-144, and Asn-253 each contribute to the Mg(2+) site. Asp-144 functions as the Proton donor in the catalytic mechanism.

As to quaternary structure, monomer. Mg(2+) serves as cofactor.

Its subcellular location is the nucleus. The catalysed reaction is O-phospho-L-seryl-[protein] + H2O = L-seryl-[protein] + phosphate. It catalyses the reaction O-phospho-L-threonyl-[protein] + H2O = L-threonyl-[protein] + phosphate. Its function is as follows. May function as a phosphatase involved in the regulation of cell growth and differentiation. The sequence is that of Probable C-terminal domain small phosphatase (fcpA) from Dictyostelium discoideum (Social amoeba).